Reading from the N-terminus, the 367-residue chain is Alpha-2-HS-glycoprotein (367 aa).

Residues 1 to 18 (MKSLVLLLCLAQLWGCHS) form the signal peptide. The 107-residue stretch at 27–133 (YRQPNCDDPE…KFSVVYAKCD (107 aa)) folds into the Cystatin fetuin-A-type 1 domain. Cystine bridges form between Cys-32–Cys-358, Cys-89–Cys-100, Cys-114–Cys-132, Cys-146–Cys-149, Cys-208–Cys-219, and Cys-230–Cys-247. Phosphoserine is present on residues Ser-134, Ser-135, and Ser-138. One can recognise a Cystatin fetuin-A-type 2 domain in the interval 144–255 (KVCQDCPLLA…TCTVFQTQPV (112 aa)). Asn-156 and Asn-176 each carry an N-linked (GlcNAc...) asparagine glycan. The tract at residues 254 to 301 (PVTSQPQPEGANETVPTPVVDPDAPPSPPLGAPGLPPAGSPPDSHVLL) is disordered. Asn-265 carries N-linked (GlcNAc...) asparagine glycosylation. Residues 276-293 (DAPPSPPLGAPGLPPAGS) are compositionally biased toward pro residues. A propeptide spans 301–340 (LAAPPGHQLHWAHYDLRHTFMGVVSLGSPSGEASHPRKTR) (connecting peptide). Thr-319 bears the Phosphothreonine mark. Ser-325, Ser-328, and Ser-330 each carry phosphoserine. O-linked (GalNAc...) threonine glycosylation occurs at Thr-339.

Belongs to the fetuin family. In terms of assembly, alpha-2-HS glycoprotein derives from this precursor, when the connecting peptide is cleaved off. The two chains A and B are held together by a single disulfide bond. In terms of processing, phosphorylated by FAM20C in the extracellular medium.

It is found in the secreted. Promotes endocytosis, possesses opsonic properties and influences the mineral phase of bone. Shows affinity for calcium and barium ions. The protein is Alpha-2-HS-glycoprotein (AHSG) of Pan troglodytes (Chimpanzee).